The following is a 197-amino-acid chain: Potassium-transporting ATPase KdpC subunit (197 aa).

The helical transmembrane segment at 7–27 threads the bilayer; that stretch reads PAFISLILFTLLFGLIYPLTV.

The protein belongs to the KdpC family. The system is composed of three essential subunits: KdpA, KdpB and KdpC.

It localises to the cell inner membrane. Its function is as follows. Part of the high-affinity ATP-driven potassium transport (or Kdp) system, which catalyzes the hydrolysis of ATP coupled with the electrogenic transport of potassium into the cytoplasm. This subunit acts as a catalytic chaperone that increases the ATP-binding affinity of the ATP-hydrolyzing subunit KdpB by the formation of a transient KdpB/KdpC/ATP ternary complex. This chain is Potassium-transporting ATPase KdpC subunit, found in Beijerinckia indica subsp. indica (strain ATCC 9039 / DSM 1715 / NCIMB 8712).